Consider the following 410-residue polypeptide: Neuroserpin (410 aa).

An N-terminal signal peptide occupies residues Met1–Ala16. N-linked (GlcNAc...) asparagine glycans are attached at residues Asn157, Asn321, and Asn401. The O-linked (Xyl...) (chondroitin sulfate) serine glycan is linked to Ser403.

The protein belongs to the serpin family. As to quaternary structure, monomer. Has a tendency to form large polymers already at 41 and 45 degrees Celsius (in vitro). In terms of tissue distribution, detected in brain cortex and hippocampus pyramidal neurons (at protein level). Detected in cerebrospinal fluid (at protein level). Predominantly expressed in the brain.

It is found in the secreted. Its subcellular location is the cytoplasmic vesicle. The protein resides in the secretory vesicle lumen. It localises to the perikaryon. Serine protease inhibitor that inhibits plasminogen activators and plasmin but not thrombin. May be involved in the formation or reorganization of synaptic connections as well as for synaptic plasticity in the adult nervous system. May protect neurons from cell damage by tissue-type plasminogen activator. This is Neuroserpin (SERPINI1) from Homo sapiens (Human).